A 353-amino-acid polypeptide reads, in one-letter code: Phosphate acyltransferase (353 aa).

The protein belongs to the PlsX family. In terms of assembly, homodimer. Probably interacts with PlsY.

Its subcellular location is the cytoplasm. The catalysed reaction is a fatty acyl-[ACP] + phosphate = an acyl phosphate + holo-[ACP]. Its pathway is lipid metabolism; phospholipid metabolism. Its function is as follows. Catalyzes the reversible formation of acyl-phosphate (acyl-PO(4)) from acyl-[acyl-carrier-protein] (acyl-ACP). This enzyme utilizes acyl-ACP as fatty acyl donor, but not acyl-CoA. The sequence is that of Phosphate acyltransferase from Ralstonia pickettii (strain 12J).